The chain runs to 245 residues: Probable ABC transporter permease protein HI_0355 (245 aa).

The next 6 membrane-spanning stretches (helical) occupy residues 9-29, 61-81, 92-112, 115-135, 170-190, and 217-237; these read LLIV…GSFP, ICLG…LLSF, ILVI…VLWF, GMAS…TAAC, LPAF…GAVV, and FAAL…IDWL. The region spanning 50 to 234 is the ABC transmembrane type-1 domain; it reads LWQHTQVTLL…SISLCLYFSI (185 aa).

It belongs to the binding-protein-dependent transport system permease family. CysTW subfamily.

It is found in the cell inner membrane. Its function is as follows. Probably part of a binding-protein-dependent transport system. Probably responsible for the translocation of the substrate across the membrane. This is Probable ABC transporter permease protein HI_0355 from Haemophilus influenzae (strain ATCC 51907 / DSM 11121 / KW20 / Rd).